The sequence spans 360 residues: POU domain, class 5, transcription factor 1 (360 aa).

Disordered stretches follow at residues methionine 1–valine 51 and glycine 88–proline 114. A 9aaTAD motif is present at residues histidine 4–serine 12. Phosphoserine; by MAPK is present on serine 111. Lysine 123 is covalently cross-linked (Glycyl lysine isopeptide (Lys-Gly) (interchain with G-Cter in SUMO)). One can recognise a POU-specific domain in the interval aspartate 138 to aspartate 212. Residues arginine 157 and glutamine 164 each contribute to the DNA site. 2 DNA-binding regions span residues serine 180–arginine 186 and serine 193–asparagine 196. Residues arginine 230–serine 289 constitute a DNA-binding region (homeobox). Position 235 is a phosphothreonine (threonine 235). Serine 236, serine 289, serine 290, and serine 355 each carry phosphoserine.

Belongs to the POU transcription factor family. Class-5 subfamily. As to quaternary structure, interacts with PKM. Interacts with WWP2. Interacts with UBE2I and ZSCAN10. Interacts with PCGF1. Interacts with ESRRB; recruits ESRRB near the POU5F1-SOX2 element in the NANOG proximal promoter; the interaction is DNA independent. Interacts with ZNF322. Interacts with MAPK8 and MAPK9; the interaction allows MAPK8 and MAPK9 to phosphorylate POU5F1 on Ser-355. Interacts (when phosphorylated on Ser-355) with FBXW8. Interacts with FBXW4. Interacts with SOX2 and SOX15; binds synergistically with either SOX2 or SOX15 to DNA. Interacts with DDX56. Sumoylation enhances the protein stability, DNA binding and transactivation activity. Sumoylation is required for enhanced YES1 expression. In terms of processing, ubiquitinated; undergoes 'Lys-63'-linked polyubiquitination by WWP2 leading to proteasomal degradation. Post-translationally, ERK1/2-mediated phosphorylation at Ser-111 promotes nuclear exclusion and proteasomal degradation. Phosphorylation at Thr-235 and Ser-236 decrease DNA-binding and alters ability to activate transcription.

The protein resides in the cytoplasm. Its subcellular location is the nucleus. In terms of biological role, transcription factor that binds to the octamer motif (5'-ATTTGCAT-3'). Forms a trimeric complex with SOX2 or SOX15 on DNA and controls the expression of a number of genes involved in embryonic development such as YES1, FGF4, UTF1 and ZFP206. Critical for early embryogenesis and for embryonic stem cell pluripotency. This chain is POU domain, class 5, transcription factor 1 (POU5F1), found in Pan troglodytes (Chimpanzee).